We begin with the raw amino-acid sequence, 177 residues long: MSDKPASMYRDIDKPAYTRREYITGIPGSKIAQHKMGRKQKDADDYPVQISLIVEETVQLRHGSLEASRLSANRHLIKELGEEGDYKMTLRKFPHQVLRENKQATGAGADRVSDGMRAAFGKIVGTAARVQAGEQLFTAYCNVEDAEHVKEAFRRAYNKITPSCRIKVERGEELLIA.

The protein belongs to the universal ribosomal protein uL16 family. As to quaternary structure, part of the 50S ribosomal subunit. Weakly binds 5S rRNA. Probably binds the A and P site tRNAs.

Its function is as follows. This is 1 of 5 proteins that mediate the attachment of the 5S rRNA onto the large ribosomal subunit, stabilizing the orientation of adjacent RNA domains. Modeling places the A and P site tRNAs in close proximity to this protein. The polypeptide is Large ribosomal subunit protein uL16 (Haloarcula marismortui (strain ATCC 43049 / DSM 3752 / JCM 8966 / VKM B-1809) (Halobacterium marismortui)).